The following is a 508-amino-acid chain: Maturase K (508 aa).

It belongs to the intron maturase 2 family. MatK subfamily.

It localises to the plastid. It is found in the chloroplast. In terms of biological role, usually encoded in the trnK tRNA gene intron. Probably assists in splicing its own and other chloroplast group II introns. The chain is Maturase K from Ranunculus glacialis (Glacier buttercup).